The chain runs to 219 residues: MSELPADQGVPPAGAANDNGDVRQAEVGGRRREPAPAQPVAARDRPMAAAVEGSMASPVEGPVPEAREGPMAASREGLGAAAREARMAEVARLLAEPAEEEGPEGRPRSRPGNGPGLAALPYLRLRHPLGVLGINYQQFLRHYLEHYPIAPGRIQELEGRRRRFVEACRAREAAFDAEYQRNPQRMDFDILTFSITLTASEIINPLIEELGCDKFISRE.

Residues 1-71 (MSELPADQGV…PVPEAREGPM (71 aa)) form a disordered region. Positions 20 to 34 (GDVRQAEVGGRRREP) are enriched in basic and acidic residues. R75 is modified (omega-N-methylarginine). A disordered region spans residues 95-115 (AEPAEEEGPEGRPRSRPGNGP).

Heterodimer with EID2B. Interacts with the C-terminus of EP300. Interacts with HDAC1 and HDAC2. Interacts with SMAD2, SMAD4 and with the MH2 domain of SMAD3.

It localises to the nucleus. In terms of biological role, interacts with EP300 and acts as a repressor of MYOD-dependent transcription and muscle differentiation. Inhibits EP300 histone acetyltransferase activity. Acts as a repressor of TGFB/SMAD transcriptional responses. May act as a repressor of the TGFB/SMAD3-dependent signaling by selectively blocking formation of TGFB-induced SMAD3-SMAD4 complex. The chain is EP300-interacting inhibitor of differentiation 2 from Bos taurus (Bovine).